A 34-amino-acid chain; its full sequence is Putative protein YmiB (34 aa).

Residues Thr7–Trp24 traverse the membrane as a helical segment.

It localises to the membrane. This is Putative protein YmiB (ymiB) from Escherichia coli (strain K12).